Reading from the N-terminus, the 96-residue chain is MNYVNIVEKSKNFIELELVNDDHSLSNLIKEVLLSKKGVILASYGVEHPVLDPDTGRYISNPTIMLKTDEKTDAEKVLKEALKDIVDLCNKTLKEL.

It belongs to the archaeal Rpo11/eukaryotic RPB11/RPC19 RNA polymerase subunit family. As to quaternary structure, part of the RNA polymerase complex.

Its subcellular location is the cytoplasm. It carries out the reaction RNA(n) + a ribonucleoside 5'-triphosphate = RNA(n+1) + diphosphate. In terms of biological role, DNA-dependent RNA polymerase (RNAP) catalyzes the transcription of DNA into RNA using the four ribonucleoside triphosphates as substrates. The protein is DNA-directed RNA polymerase subunit Rpo11 of Methanococcus maripaludis (strain C5 / ATCC BAA-1333).